The following is a 342-amino-acid chain: N-acetyl-gamma-glutamyl-phosphate reductase (342 aa).

The active site involves Cys-146.

Belongs to the NAGSA dehydrogenase family. Type 1 subfamily.

It localises to the cytoplasm. The catalysed reaction is N-acetyl-L-glutamate 5-semialdehyde + phosphate + NADP(+) = N-acetyl-L-glutamyl 5-phosphate + NADPH + H(+). The protein operates within amino-acid biosynthesis; L-arginine biosynthesis; N(2)-acetyl-L-ornithine from L-glutamate: step 3/4. In terms of biological role, catalyzes the NADPH-dependent reduction of N-acetyl-5-glutamyl phosphate to yield N-acetyl-L-glutamate 5-semialdehyde. The chain is N-acetyl-gamma-glutamyl-phosphate reductase from Streptomyces coelicolor (strain ATCC BAA-471 / A3(2) / M145).